The sequence spans 161 residues: Nucleotide-binding protein Bpro_1596 (161 aa).

It belongs to the YajQ family.

Its function is as follows. Nucleotide-binding protein. This chain is Nucleotide-binding protein Bpro_1596, found in Polaromonas sp. (strain JS666 / ATCC BAA-500).